A 268-amino-acid polypeptide reads, in one-letter code: Ribosomal RNA small subunit methyltransferase A (268 aa).

Positions 12, 14, 38, 59, 82, and 107 each coordinate S-adenosyl-L-methionine.

Belongs to the class I-like SAM-binding methyltransferase superfamily. rRNA adenine N(6)-methyltransferase family. RsmA subfamily.

It localises to the cytoplasm. The catalysed reaction is adenosine(1518)/adenosine(1519) in 16S rRNA + 4 S-adenosyl-L-methionine = N(6)-dimethyladenosine(1518)/N(6)-dimethyladenosine(1519) in 16S rRNA + 4 S-adenosyl-L-homocysteine + 4 H(+). Its function is as follows. Specifically dimethylates two adjacent adenosines (A1518 and A1519) in the loop of a conserved hairpin near the 3'-end of 16S rRNA in the 30S particle. May play a critical role in biogenesis of 30S subunits. This is Ribosomal RNA small subunit methyltransferase A from Aster yellows witches'-broom phytoplasma (strain AYWB).